Consider the following 265-residue polypeptide: L-histidine 2-aminobutanoyltransferase (265 aa).

The protein belongs to the methyltransferase superfamily. CntL family.

It catalyses the reaction L-histidine + S-adenosyl-L-methionine = (2S)-2-amino-4-{[(1S)-1-carboxy-2-(1H-imidazol-4-yl)ethyl]amino}butanoate + S-methyl-5'-thioadenosine + H(+). Catalyzes the nucleophilic attack of one alpha-aminobutanoate moiety from SAM onto L-histidine to produce the intermediate (2S)-2-amino-4-{[(1S)-1-carboxy-2-(1H-imidazol-4-yl)ethyl]amino}butanoate. Functions in the biosynthesis of the metallophore yersinopine, which is involved in metal acquisition and thus enables bacterial growth inside the host, where metal access is limited. Therefore, this enzyme probably contributes to Yersinia virulence. The polypeptide is L-histidine 2-aminobutanoyltransferase (Yersinia pestis).